Here is a 134-residue protein sequence, read N- to C-terminus: Small ribosomal subunit protein uS9c (134 aa).

Residues 105–134 are disordered; it reads QGYLTRNPLRKERKKYGLKKARKAPQFSKR. The span at 115 to 134 shows a compositional bias: basic residues; it reads KERKKYGLKKARKAPQFSKR.

It belongs to the universal ribosomal protein uS9 family.

Its subcellular location is the plastid. The protein localises to the chloroplast. The polypeptide is Small ribosomal subunit protein uS9c (rps9) (Nephroselmis olivacea (Green alga)).